The sequence spans 308 residues: Apolipoprotein E (308 aa).

The N-terminal stretch at 1 to 18 (MKFLWAALVVTLLAGCRA) is a signal peptide. 8 tandem repeats follow at residues 75 to 96 (LLIE…KQVG), 97 to 118 (PIAQ…ARLE), 119 to 140 (SDME…AALG), 141 to 162 (QNTD…KRLL), 163 to 184 (RDAE…EAAE), 185 to 206 (RGVS…LQAI), 207 to 224 (PPSQ…QKVR), and 225 to 246 (GRLE…DQME). Positions 75–246 (LLIEETMKEV…RLDDMRDQME (172 aa)) are 8 X 22 AA approximate tandem repeats. An LDL and other lipoprotein receptors binding region spans residues 153-163 (HLRKLRKRLLR). 157-160 (LRKR) serves as a coordination point for heparin. Positions 205 to 281 (AIPPSQQLRE…SWFEPLVQDM (77 aa)) are lipid-binding and lipoprotein association. Residue 220–227 (GQKVRGRL) coordinates heparin. The interval 257–308 (SQVRLQAEAFQTRLKSWFEPLVQDMQRQWASLVEKVQSTLGISPSTKPSKTK) is homooligomerization. Residues 269–281 (RLKSWFEPLVQDM) are specificity for association with VLDL.

It belongs to the apolipoprotein A1/A4/E family. Homotetramer. May interact with ABCA1; functionally associated with ABCA1 in the biogenesis of HDLs. May interact with APP/A4 amyloid-beta peptide; the interaction is extremely stable in vitro but its physiological significance is unclear. May interact with MAPT. May interact with MAP2. In the cerebrospinal fluid, interacts with secreted SORL1. Interacts with PMEL; this allows the loading of PMEL luminal fragment on ILVs to induce fibril nucleation. In terms of processing, APOE exists as multiple glycosylated and sialylated glycoforms within cells and in plasma. The extent of glycosylation and sialylation are tissue and context specific. Glycated in plasma VLDL. Post-translationally, phosphorylated by FAM20C in the extracellular medium.

It localises to the secreted. Its subcellular location is the extracellular space. The protein localises to the extracellular matrix. It is found in the extracellular vesicle. The protein resides in the endosome. It localises to the multivesicular body. Its function is as follows. APOE is an apolipoprotein, a protein associating with lipid particles, that mainly functions in lipoprotein-mediated lipid transport between organs via the plasma and interstitial fluids. APOE is a core component of plasma lipoproteins and is involved in their production, conversion and clearance. Apolipoproteins are amphipathic molecules that interact both with lipids of the lipoprotein particle core and the aqueous environment of the plasma. As such, APOE associates with chylomicrons, chylomicron remnants, very low density lipoproteins (VLDL) and intermediate density lipoproteins (IDL) but shows a preferential binding to high-density lipoproteins (HDL). It also binds a wide range of cellular receptors including the LDL receptor/LDLR and the very low-density lipoprotein receptor/VLDLR that mediate the cellular uptake of the APOE-containing lipoprotein particles. Finally, APOE also has a heparin-binding activity and binds heparan-sulfate proteoglycans on the surface of cells, a property that supports the capture and the receptor-mediated uptake of APOE-containing lipoproteins by cells. The chain is Apolipoprotein E (APOE) from Pteropus vampyrus (Large flying fox).